A 794-amino-acid polypeptide reads, in one-letter code: Protein sel-1 homolog 1 (794 aa).

The signal sequence occupies residues Met1–Ala21. The segment at Thr20–Ile91 is disordered. Residues Ser22–Gln737 are interaction with ERLEC1, OS9 and SYVN1. Residues Ser22–Leu738 lie on the Lumenal side of the membrane. 2 stretches are compositionally biased toward acidic residues: residues Ser23 to Ser32 and Asp62 to Glu77. Ser63 is modified (phosphoserine). The 49-residue stretch at Ala122–Thr170 folds into the Fibronectin type-II domain. Cystine bridges form between Cys127–Cys153 and Cys141–Cys168. 9 Sel1-like repeats span residues Ala183–His218, Thr219–Ser254, Pro255–Asn290, Leu291–Ala326, Val373–Asn409, Ser410–Asn446, Pro447–Trp482, Val483–His518, and Ile519–Arg554. N-linked (GlcNAc...) asparagine glycosylation is found at Asn195 and Asn217. N-linked (GlcNAc...) asparagine glycosylation is present at Asn272. An important for homodimerization and oligomerization region spans residues Asn352 to Arg537. Asn431 carries an N-linked (GlcNAc...) asparagine glycan. N-linked (GlcNAc...) asparagine glycosylation is present at Asn608. Sel1-like repeat units lie at residues Thr627–His662 and Ala664–Pro699. Positions Thr643 to Glu723 are interaction with SYVN1. The segment at Leu738 to Gln794 is mediates retention in the endoplasmic reticulum. A helical membrane pass occupies residues Leu739 to Ile759. Residues Ala760–Gln794 are Cytoplasmic-facing. A disordered region spans residues Asp768–Gln794. A compositionally biased stretch (pro residues) spans Val771–Gln794.

This sequence belongs to the sel-1 family. In terms of assembly, homodimer and homooligomer. May form a complex with ERLEC1, HSPA5, OS9, and SYVN1. Interacts with FOXRED2 and EDEM1. Interacts with LPL and LMF1; may stabilize the complex formed by LPL and LMF1 and thereby promote the export of LPL dimers. Component of the HRD1 complex, which comprises at least SYNV1/HRD1, DERL1/2, FAM8A1, HERPUD1/HERP, OS9, SEL1L and UBE2J1. SYNV1 assembles with SEL1L and FAM8A1 through its transmembrane domains, but interaction with its cytoplasmic domain is required to confer stability to FAM8A1 and enhance recruitment of HERPUD1. The interaction with SYNV1/HRD1 is direct. In terms of processing, N-glycosylated.

It is found in the endoplasmic reticulum membrane. Plays a role in the endoplasmic reticulum quality control (ERQC) system also called ER-associated degradation (ERAD) involved in ubiquitin-dependent degradation of misfolded endoplasmic reticulum proteins. Enhances SYVN1 stability. Plays a role in LPL maturation and secretion. Required for normal differentiation of the pancreas epithelium, and for normal exocrine function and survival of pancreatic cells. May play a role in Notch signaling. In Mesocricetus auratus (Golden hamster), this protein is Protein sel-1 homolog 1 (Sel1l).